A 151-amino-acid chain; its full sequence is Sigma factor binding protein 1, chloroplastic (151 aa).

A compositionally biased stretch (low complexity) spans 1-13 (MESSSSTFLTTTS). Disordered regions lie at residues 1–41 (MESS…KPIK) and 66–93 (TGQD…PPAE). A chloroplast-targeting transit peptide spans 1-54 (MESSSSTFLTTTSLDKKKPSPVSRKSPKQKKKTTSTNKPIKVRYISNPMRVQTC). The Bipartite nuclear localization signal signature appears at 16–32 (KKKPSPVSRKSPKQKKK). The short motif at 58–67 (FRELVQELTG) is the VQ element.

In terms of assembly, interacts with the sigma factor SIGA in chloroplast. Interacts with WRKY25 and WRKY33 in the nucleus. As to expression, expressed in leaves and roots, but not in flowers.

Its subcellular location is the plastid. It is found in the chloroplast. The protein localises to the nucleus. In terms of biological role, contributes to plant defense. May regulate chloroplast metabolism upon infection with pathogens such as Pseudomonas syringae. Functions as activator of WRKY33 in plant defense against necrotrophic pathogens by stimulating the DNA-binding activity of WRKY33. The sequence is that of Sigma factor binding protein 1, chloroplastic (SIB1) from Arabidopsis thaliana (Mouse-ear cress).